Consider the following 369-residue polypeptide: Cellular tumor antigen p53 (369 aa).

Residues 1 to 28 (MAESQEFAELWERNLISTQEAGTCWELI) are transcription activation (acidic). A DNA-binding region spans residues 66-256 (DYPGEHGFKL…KTEESNFRKD (191 aa)). Zn(2+) is bound by residues Cys140, His143, Cys202, and Cys206. Residues 237 to 244 (RVCACPGR) form an interaction with DNA region. The segment covering 246-263 (RKTEESNFRKDQETKTLD) has biased composition (basic and acidic residues). 2 disordered regions span residues 246-296 (RKTE…SGSS) and 318-369 (NDSL…SDSD). Positions 269-281 (NKRSLTKDSTSSV) are enriched in polar residues. A Bipartite nuclear localization signal motif is present at residues 270–289 (KRSLTKDSTSSVPRPEGSKK). The segment at 298-329 (EEIYTLQVRGKERYEMLKKINDSLELSDVVPP) is oligomerization. The Nuclear export signal motif lies at 312–323 (EMLKKINDSLEL). Residues 342–365 (KGKKKDGQTPEPKRGKKLMVKDEK) form a basic (repression of DNA-binding) region. The span at 346 to 369 (KDGQTPEPKRGKKLMVKDEKSDSD) shows a compositional bias: basic and acidic residues.

The protein belongs to the p53 family. As to quaternary structure, binds DNA as a homotetramer. Zn(2+) is required as a cofactor.

The protein resides in the cytoplasm. The protein localises to the nucleus. In terms of biological role, multifunctional transcription factor that induces cell cycle arrest, DNA repair or apoptosis upon binding to its target DNA sequence. Acts as a tumor suppressor in many tumor types; induces growth arrest or apoptosis depending on the physiological circumstances and cell type. Negatively regulates cell division by controlling expression of a set of genes required for this process. One of the activated genes is an inhibitor of cyclin-dependent kinases. Apoptosis induction seems to be mediated either by stimulation of BAX and FAS antigen expression, or by repression of Bcl-2 expression. This Barbus barbus (Barbel) protein is Cellular tumor antigen p53 (tp53).